We begin with the raw amino-acid sequence, 295 residues long: sn-glycerol-3-phosphate transport system permease protein UgpA (295 aa).

Residues 1–11 are Cytoplasmic-facing; it reads MSSSRPVFRSR. A helical membrane pass occupies residues 12-32; that stretch reads WLPYLLVAPQLIITVIFFIWP. Over 33-80 the chain is Periplasmic; it reads AGEALWYSLQSVDPFGFSSRFVGLDNFVALFHDSYYIDSFWTTIKFST. Residues 76 to 284 enclose the ABC transmembrane type-1 domain; it reads IKFSTFVTVS…FLVIVLTVMQ (209 aa). The helical transmembrane segment at 81-101 threads the bilayer; that stretch reads FVTVSGLLVSLFFAALVEYIV. Residues 102–109 lie on the Cytoplasmic side of the membrane; that stretch reads RGSRFYQT. The helical transmembrane segment at 110–130 threads the bilayer; it reads LMLLPYAVAPAVAAVLWIFLF. At 131 to 156 the chain is on the periplasmic side; sequence NPGRGLITHFLAEFGYDWNHAQNSGQ. A helical transmembrane segment spans residues 157–177; sequence AMFLVVFASVWKQISYNFLFF. At 178–207 the chain is on the cytoplasmic side; the sequence is YAALQSIPRSLIEAAAIDGAGPIRRFFKIA. A helical transmembrane segment spans residues 208–228; it reads LPLIAPVSFFLLVVNLVYAFF. Topologically, residues 229 to 262 are periplasmic; sequence DTFPVIDAATSGGPVQATTTLIYKIYREGFTGLD. Residues 263–283 form a helical membrane-spanning segment; that stretch reads LASSAAQSVVLMFLVIVLTVM. At 284 to 295 the chain is on the cytoplasmic side; the sequence is QFRYVESKVRYQ.

Belongs to the binding-protein-dependent transport system permease family. UgpAE subfamily. The complex is composed of two ATP-binding proteins (UgpC), two transmembrane proteins (UgpA and UgpE) and a solute-binding protein (UgpB).

It is found in the cell inner membrane. Its function is as follows. Part of the ABC transporter complex UgpBAEC involved in sn-glycerol-3-phosphate (G3P) import. Probably responsible for the translocation of the substrate across the membrane. This chain is sn-glycerol-3-phosphate transport system permease protein UgpA (ugpA), found in Escherichia coli O157:H7.